Consider the following 442-residue polypeptide: Mannosylglycerate hydrolase (442 aa).

Substrate contacts are provided by residues Tyr-38, 42–45 (WSWD), Tyr-90, Gln-116, and Gly-176. Asp-178 (proton donor) is an active-site residue. Substrate-binding positions include Arg-213 and 369–370 (YW). Catalysis depends on Glu-413, which acts as the Proton acceptor.

This sequence belongs to the glycosyl hydrolase 63 family. In terms of assembly, homodimer in solution.

The catalysed reaction is (2R)-2-O-(alpha-D-mannosyl)-glycerate + H2O = D-mannose + (R)-glycerate. It carries out the reaction (2R)-2-O-(alpha-D-glucopyranosyl)-glycerate + H2O = (R)-glycerate + D-glucose. Activity is not stimulated by divalent cations and not affected in the presence of EDTA. Hydrolase that catalyzes the hydrolysis of mannosylglycerate (MG), a solute produced in response to osmotic stress in thermophiles, into mannose and glycerate. Can also hydrolyze glucosylglycerate (GG) to glucose and glycerate, with similar catalytic efficiency. Is highly specific for MG and GG, and cannot use mannosylglyceramide (MGA), glucosylglycerol, mannosylglucosylglycerate (MGG), glucosylglucosylglycerate (GGG) or trehalose as substrates. In Rubrobacter radiotolerans (Arthrobacter radiotolerans), this protein is Mannosylglycerate hydrolase.